Consider the following 589-residue polypeptide: MVGQMYCYPGSHLARALTRALALALVLALLVGPFLSGLAGAIPAPGGRWARDGQVPPASRSRSVLLDVSAGQLLMVDGRHPDAVAWANLTNAIRETGWAFLELGTSGQYNDSLQAYAAGVVEAAVSEELIYMHWMNTVVNYCGPFEYEVGYCERLKSFLEANLEWMQEEMESNPDSPYWHQVRLTLLQLKGLEDSYEGRVSFPAGKFTIKPLGFLLLQLSGDLEDLELALNKTKIKPSLGSGSCSALIKLLPGQSDLLVAHNTWNNYQHMLRVIKKYWLQFREGPWGDYPLVPGNKLVFSSYPGTIFSCDDFYILGSGLVTLETTIGNKNPALWKYVRPRGCVLEWVRNIVANRLASDGATWADIFKRFNSGTYNNQWMIVDYKAFIPGGPSPGSRVLTILEQIPGMVVVADKTSELYQKTYWASYNIPSFETVFNASGLQALVAQYGDWFSYDGSPRAQIFRRNQSLVQDMDSMVRLMRYNDFLHDPLSLCKACNPQPNGENAISARSDLNPANGSYPFQALRQRSHGGIDVKVTSMSLARILSLLAASGPTWDQVPPFQWSTSPFSGLLHMGQPDLWKFAPVKVSWD.

Positions 1 to 41 (MVGQMYCYPGSHLARALTRALALALVLALLVGPFLSGLAGA) are cleaved as a signal peptide. 2 N-linked (GlcNAc...) asparagine glycosylation sites follow: asparagine 88 and asparagine 110. Cysteines 142 and 152 form a disulfide. 3 N-linked (GlcNAc...) asparagine glycosylation sites follow: asparagine 231, asparagine 436, and asparagine 465. Cysteines 492 and 495 form a disulfide. Residue asparagine 515 is glycosylated (N-linked (GlcNAc...) asparagine).

This sequence belongs to the phospholipase B-like family. In terms of assembly, interacts with IGF2R. The p76 protein is synthesized as a 80 kDa precursor which is then processed into a N-terminal 32 kDa form and a C-terminal 45 kDa form. In terms of processing, glycosylated; contains mannose 6-phosphate sugars. In terms of tissue distribution, ubiquitously expressed, with highest levels in heart, brain and liver.

Its subcellular location is the lysosome lumen. Putative phospholipase. The protein is Putative phospholipase B-like 2 (PLBD2) of Homo sapiens (Human).